A 266-amino-acid polypeptide reads, in one-letter code: 3-methyl-2-oxobutanoate hydroxymethyltransferase (266 aa).

Mg(2+) is bound by residues Asp43 and Asp82. 3-methyl-2-oxobutanoate is bound by residues 43 to 44 (DS), Asp82, and Lys110. Glu112 is a Mg(2+) binding site. Catalysis depends on Glu179, which acts as the Proton acceptor.

It belongs to the PanB family. In terms of assembly, homodecamer; pentamer of dimers. Mg(2+) serves as cofactor.

It is found in the cytoplasm. It catalyses the reaction 3-methyl-2-oxobutanoate + (6R)-5,10-methylene-5,6,7,8-tetrahydrofolate + H2O = 2-dehydropantoate + (6S)-5,6,7,8-tetrahydrofolate. It functions in the pathway cofactor biosynthesis; (R)-pantothenate biosynthesis; (R)-pantoate from 3-methyl-2-oxobutanoate: step 1/2. In terms of biological role, catalyzes the reversible reaction in which hydroxymethyl group from 5,10-methylenetetrahydrofolate is transferred onto alpha-ketoisovalerate to form ketopantoate. The polypeptide is 3-methyl-2-oxobutanoate hydroxymethyltransferase (Psychrobacter arcticus (strain DSM 17307 / VKM B-2377 / 273-4)).